The following is a 451-amino-acid chain: 2,4-dinitrotoluene dioxygenase system, large oxygenase component (451 aa).

Residues 42–126 enclose the Rieske domain; it reads WLFLTHDSLI…LQSVPFEKEL (85 aa). 4 residues coordinate [2Fe-2S] cluster: cysteine 84, histidine 86, cysteine 104, and histidine 107. Residues histidine 211, histidine 216, and aspartate 365 each contribute to the Fe cation site.

The protein belongs to the bacterial ring-hydroxylating dioxygenase alpha subunit family. As to quaternary structure, the 2,4-dinitrotoluene dioxygenase (DNTDO) multicomponent enzyme system is composed of an electron transfer component and a dioxygenase component (iron sulfur protein (ISP)). The electron transfer component is composed of a ferredoxin reductase (DntAa) and a ferredoxin (DntAb), and the dioxygenase component is formed of a large alpha subunit (DntAc) and a small beta subunit (DntAd). Requires [2Fe-2S] cluster as cofactor. The cofactor is Fe(2+).

It catalyses the reaction 2,4-dinitrotoluene + NADH + O2 = 4-methyl-5-nitrocatechol + nitrite + NAD(+). Component of the 2,4-dinitrotoluene dioxygenase (DNTDO) multicomponent enzyme system which catalyzes the incorporation of both atoms of molecular oxygen into 2,4-dinitrotoluene (DNT) to form 4-methyl-5-nitrocatechol (MNC) and nitrite. The alpha subunit has a catalytic role in the holoenzyme. Also able to convert naphthalene to cis-(1R,2S)-dihydroxy-1,2-dihydronaphthalene. The polypeptide is 2,4-dinitrotoluene dioxygenase system, large oxygenase component (Burkholderia sp. (strain RASC)).